Reading from the N-terminus, the 335-residue chain is Ornithine carbamoyltransferase (335 aa).

Residues 56 to 59 (STRT), Gln-83, Arg-107, and 134 to 137 (HPTQ) contribute to the carbamoyl phosphate site. Residues Asn-168, Asp-232, and 236 to 237 (SM) each bind L-ornithine. Carbamoyl phosphate is bound by residues 274-275 (CL) and Arg-320.

This sequence belongs to the aspartate/ornithine carbamoyltransferase superfamily. OTCase family.

Its subcellular location is the cytoplasm. It carries out the reaction carbamoyl phosphate + L-ornithine = L-citrulline + phosphate + H(+). Its pathway is amino-acid biosynthesis; L-arginine biosynthesis; L-arginine from L-ornithine and carbamoyl phosphate: step 1/3. In terms of biological role, reversibly catalyzes the transfer of the carbamoyl group from carbamoyl phosphate (CP) to the N(epsilon) atom of ornithine (ORN) to produce L-citrulline. The protein is Ornithine carbamoyltransferase of Yersinia pseudotuberculosis serotype I (strain IP32953).